Consider the following 326-residue polypeptide: tRNA-modifying protein YgfZ (326 aa).

Positions 27 and 189 each coordinate folate.

The protein belongs to the tRNA-modifying YgfZ family.

Its subcellular location is the cytoplasm. In terms of biological role, folate-binding protein involved in regulating the level of ATP-DnaA and in the modification of some tRNAs. It is probably a key factor in regulatory networks that act via tRNA modification, such as initiation of chromosomal replication. The polypeptide is tRNA-modifying protein YgfZ (Escherichia coli (strain SMS-3-5 / SECEC)).